The primary structure comprises 216 residues: Ribosomal RNA large subunit methyltransferase E (216 aa).

S-adenosyl-L-methionine contacts are provided by Gly-60, Trp-62, Asp-80, Asp-96, and Asp-121. The active-site Proton acceptor is the Lys-161.

It belongs to the class I-like SAM-binding methyltransferase superfamily. RNA methyltransferase RlmE family.

The protein localises to the cytoplasm. The catalysed reaction is uridine(2552) in 23S rRNA + S-adenosyl-L-methionine = 2'-O-methyluridine(2552) in 23S rRNA + S-adenosyl-L-homocysteine + H(+). Functionally, specifically methylates the uridine in position 2552 of 23S rRNA at the 2'-O position of the ribose in the fully assembled 50S ribosomal subunit. The sequence is that of Ribosomal RNA large subunit methyltransferase E from Pseudomonas syringae pv. syringae (strain B728a).